We begin with the raw amino-acid sequence, 32 residues long: Zinc metalloproteinase/disintegrin-like CdtV1 (32 aa).

2 disulfide bridges follow: Cys-5–Cys-14 and Cys-7–Cys-15.

The protein belongs to the venom metalloproteinase (M12B) family. P-II subfamily. P-IIa sub-subfamily. In terms of assembly, monomer. In terms of tissue distribution, expressed by the venom gland.

It localises to the secreted. Functionally, snake venom metalloproteinase that impairs hemostasis in the envenomed animal. The sequence is that of Zinc metalloproteinase/disintegrin-like CdtV1 from Crotalus durissus terrificus (South American rattlesnake).